We begin with the raw amino-acid sequence, 277 residues long: MPELPEVETVRRGLNQLTLNRKITGGDVLLHRTIAHPFSVGDFLNGITGDSISAWHRRGKYLLASTTSAAWLGVHLRMTGQLLWLNQDEPLHKHTRVRIFFEDQQELRFVDQRTFGQMWWVSSGMAVESVITGLAKLAVDPFSPEFTVEYLANKLHNRRRPIKTALLDQSVVAGLGNIYADEALFKSGVLPETLCTEVQLKQIELLRTAIIQVLETSIEAGGTTFSNFLNVKGVNGNYGGVAWVYNRAGEPCKVCGDVIQRIKLGGRSSHFCRQCQV.

Residue Pro-2 is the Schiff-base intermediate with DNA of the active site. Glu-3 (proton donor) is an active-site residue. The active-site Proton donor; for beta-elimination activity is the Lys-60. The DNA site is built by His-94, Arg-113, and Arg-158. An FPG-type zinc finger spans residues 243-277 (WVYNRAGEPCKVCGDVIQRIKLGGRSSHFCRQCQV). Catalysis depends on Arg-267, which acts as the Proton donor; for delta-elimination activity.

The protein belongs to the FPG family. Monomer. The cofactor is Zn(2+).

The enzyme catalyses Hydrolysis of DNA containing ring-opened 7-methylguanine residues, releasing 2,6-diamino-4-hydroxy-5-(N-methyl)formamidopyrimidine.. The catalysed reaction is 2'-deoxyribonucleotide-(2'-deoxyribose 5'-phosphate)-2'-deoxyribonucleotide-DNA = a 3'-end 2'-deoxyribonucleotide-(2,3-dehydro-2,3-deoxyribose 5'-phosphate)-DNA + a 5'-end 5'-phospho-2'-deoxyribonucleoside-DNA + H(+). Functionally, involved in base excision repair of DNA damaged by oxidation or by mutagenic agents. Acts as a DNA glycosylase that recognizes and removes damaged bases. Has a preference for oxidized purines, such as 7,8-dihydro-8-oxoguanine (8-oxoG). Has AP (apurinic/apyrimidinic) lyase activity and introduces nicks in the DNA strand. Cleaves the DNA backbone by beta-delta elimination to generate a single-strand break at the site of the removed base with both 3'- and 5'-phosphates. The sequence is that of Formamidopyrimidine-DNA glycosylase from Trichormus variabilis (strain ATCC 29413 / PCC 7937) (Anabaena variabilis).